Reading from the N-terminus, the 319-residue chain is HTH-type transcriptional regulator YidZ (319 aa).

The region spanning 8 to 65 (LDLNLLLCLQLLMQERSVTKAAKRMNVTPSAVSKSLAKLRAWFDDPLFVNSPLGLSPT) is the HTH lysR-type domain. The H-T-H motif DNA-binding region spans 25 to 44 (VTKAAKRMNVTPSAVSKSLA).

The protein belongs to the LysR transcriptional regulatory family.

Involved in anaerobic NO protection. The chain is HTH-type transcriptional regulator YidZ from Escherichia coli O17:K52:H18 (strain UMN026 / ExPEC).